The following is a 153-amino-acid chain: Arginine repressor (153 aa).

It belongs to the ArgR family.

It is found in the cytoplasm. Its pathway is amino-acid biosynthesis; L-arginine biosynthesis [regulation]. In terms of biological role, regulates arginine biosynthesis genes. This Actinobacillus pleuropneumoniae serotype 7 (strain AP76) protein is Arginine repressor.